The primary structure comprises 371 residues: Queuine tRNA-ribosyltransferase (371 aa).

Residue Asp-89 is the Proton acceptor of the active site. Substrate contacts are provided by residues 89–93, Asp-143, Gln-185, and Gly-212; that span reads DSGGF. The RNA binding stretch occupies residues 243 to 249; the sequence is GVGKPED. Asp-262 (nucleophile) is an active-site residue. The RNA binding; important for wobble base 34 recognition stretch occupies residues 267–271; it reads TRNAR. Zn(2+) contacts are provided by Cys-300, Cys-302, Cys-305, and His-331.

The protein belongs to the queuine tRNA-ribosyltransferase family. In terms of assembly, homodimer. Within each dimer, one monomer is responsible for RNA recognition and catalysis, while the other monomer binds to the replacement base PreQ1. Zn(2+) serves as cofactor.

It catalyses the reaction 7-aminomethyl-7-carbaguanine + guanosine(34) in tRNA = 7-aminomethyl-7-carbaguanosine(34) in tRNA + guanine. The protein operates within tRNA modification; tRNA-queuosine biosynthesis. Functionally, catalyzes the base-exchange of a guanine (G) residue with the queuine precursor 7-aminomethyl-7-deazaguanine (PreQ1) at position 34 (anticodon wobble position) in tRNAs with GU(N) anticodons (tRNA-Asp, -Asn, -His and -Tyr). Catalysis occurs through a double-displacement mechanism. The nucleophile active site attacks the C1' of nucleotide 34 to detach the guanine base from the RNA, forming a covalent enzyme-RNA intermediate. The proton acceptor active site deprotonates the incoming PreQ1, allowing a nucleophilic attack on the C1' of the ribose to form the product. After dissociation, two additional enzymatic reactions on the tRNA convert PreQ1 to queuine (Q), resulting in the hypermodified nucleoside queuosine (7-(((4,5-cis-dihydroxy-2-cyclopenten-1-yl)amino)methyl)-7-deazaguanosine). This is Queuine tRNA-ribosyltransferase from Pseudomonas putida (strain ATCC 47054 / DSM 6125 / CFBP 8728 / NCIMB 11950 / KT2440).